The primary structure comprises 188 residues: MASVSTNEFKGGLKFMLDNEPCSIIENEYVKPGKGQAFNRVKLRRLLSGKTLEKTFKSGESFELADVVDVELDYLYNDGEFYHFMNSVSFEQIAADVKAVGDTAKWLVENDTCTLTLWNDNPITVTPPNFVELEVTETDPGLKGDTQGTGGKPATLSTGAVVRVPLFIAIGEVVKVDTRTGEYVGRVK.

K34 carries the post-translational modification N6-(3,6-diaminohexanoyl)-5-hydroxylysine.

The protein belongs to the elongation factor P family. Post-translationally, may be beta-lysylated on the epsilon-amino group of Lys-34 by the combined action of EpmA and EpmB, and then hydroxylated on the C5 position of the same residue by EpmC (if this protein is present). Lysylation is critical for the stimulatory effect of EF-P on peptide-bond formation. The lysylation moiety may extend toward the peptidyltransferase center and stabilize the terminal 3-CCA end of the tRNA. Hydroxylation of the C5 position on Lys-34 may allow additional potential stabilizing hydrogen-bond interactions with the P-tRNA.

The protein resides in the cytoplasm. The protein operates within protein biosynthesis; polypeptide chain elongation. Functionally, involved in peptide bond synthesis. Alleviates ribosome stalling that occurs when 3 or more consecutive Pro residues or the sequence PPG is present in a protein, possibly by augmenting the peptidyl transferase activity of the ribosome. Modification of Lys-34 is required for alleviation. The polypeptide is Elongation factor P (Aliivibrio fischeri (strain ATCC 700601 / ES114) (Vibrio fischeri)).